We begin with the raw amino-acid sequence, 381 residues long: MKIIFATEPIKYPLTGIGRYSLELVKRLAVAREIEELKLFHGASFIDQIPQVENKSDSKASNHGRLLAFLRRQPLLIEAYRLLHPRRQAWALRDYKDYIYHGPNFYLPHRLERAVTTFHDISIFTCPEYHPKDRVRYMEKSLHESLDSAKLILTVSDFSRSEIIRLFNYPADRIVTTKLACSSDYIPRSPAECLPVLQKYQLAWQGYALYIGTMEPRKNIRGLLQAYQLLPMETRMRYPLILSGYRGWEDDVLWQLVERGTREGWIRYLGYVPDEDLPYLYAAARTFVYPSFYEGFGLPILEAMSCGVPVVCSNVTSLPEVVGDAGLVADPNDVDAISAHILQSLQDDSWREIATARGLAQAKQFSWENCTTQTINAYKLL.

Belongs to the glycosyltransferase group 1 family. Glycosyltransferase 4 subfamily.

It carries out the reaction alpha-D-mannosyl-(1-&gt;3)-N-acetyl-alpha-D-glucosaminyl-di-trans,octa-cis-undecaprenyl diphosphate + 2 GDP-alpha-D-mannose = alpha-D-mannosyl-(1-&gt;3)-alpha-D-mannosyl-(1-&gt;3)-alpha-D-mannosyl-(1-&gt;3)-N-acetyl-alpha-D-glucosaminyl-di-trans,octa-cis-undecaprenyl diphosphate + 2 GDP + 2 H(+). It participates in bacterial outer membrane biogenesis; LPS O-antigen biosynthesis. Its function is as follows. Mannosyltransferase involved in the biosynthesis of the repeat unit of the lipopolysaccharide (LPS) O-antigen region. Catalyzes the transfer of two alpha-(1-&gt;3)-linked mannose residues to the product of the WbdC enzyme during the synthesis of the adapter region. The protein is O-antigen chain mannosyltransferase B of Escherichia coli.